A 145-amino-acid polypeptide reads, in one-letter code: D-aminoacyl-tRNA deacylase (145 aa).

The short motif at 137-138 (GP) is the Gly-cisPro motif, important for rejection of L-amino acids element.

Belongs to the DTD family. In terms of assembly, homodimer.

The protein localises to the cytoplasm. The catalysed reaction is glycyl-tRNA(Ala) + H2O = tRNA(Ala) + glycine + H(+). The enzyme catalyses a D-aminoacyl-tRNA + H2O = a tRNA + a D-alpha-amino acid + H(+). In terms of biological role, an aminoacyl-tRNA editing enzyme that deacylates mischarged D-aminoacyl-tRNAs. Also deacylates mischarged glycyl-tRNA(Ala), protecting cells against glycine mischarging by AlaRS. Acts via tRNA-based rather than protein-based catalysis; rejects L-amino acids rather than detecting D-amino acids in the active site. By recycling D-aminoacyl-tRNA to D-amino acids and free tRNA molecules, this enzyme counteracts the toxicity associated with the formation of D-aminoacyl-tRNA entities in vivo and helps enforce protein L-homochirality. This is D-aminoacyl-tRNA deacylase from Streptomyces avermitilis (strain ATCC 31267 / DSM 46492 / JCM 5070 / NBRC 14893 / NCIMB 12804 / NRRL 8165 / MA-4680).